Here is a 28-residue protein sequence, read N- to C-terminus: Cyclotide vodo I3 (28 aa).

3 disulfide bridges follow: C4–C18, C8–C20, and C13–C25.

This is a cyclic peptide. In terms of processing, contains 3 disulfide bonds.

In terms of biological role, probably participates in a plant defense mechanism. This chain is Cyclotide vodo I3, found in Viola odorata (Sweet violet).